The chain runs to 174 residues: Gamma-crystallin D (174 aa).

Beta/gamma crystallin 'Greek key' domains follow at residues Gly-2–Ser-40 and Gly-41–Pro-83. Positions His-84–Ser-87 are connecting peptide. Beta/gamma crystallin 'Greek key' domains follow at residues His-88 to Glu-128 and Gly-129 to Ile-171.

This sequence belongs to the beta/gamma-crystallin family.

Its function is as follows. Crystallins are the dominant structural components of the vertebrate eye lens. This is Gamma-crystallin D (CRYGD) from Bos taurus (Bovine).